A 299-amino-acid polypeptide reads, in one-letter code: tRNA pseudouridine synthase B (299 aa).

Residue aspartate 38 is the Nucleophile of the active site.

It belongs to the pseudouridine synthase TruB family. Type 1 subfamily.

It catalyses the reaction uridine(55) in tRNA = pseudouridine(55) in tRNA. Responsible for synthesis of pseudouridine from uracil-55 in the psi GC loop of transfer RNAs. The polypeptide is tRNA pseudouridine synthase B (Pediococcus pentosaceus (strain ATCC 25745 / CCUG 21536 / LMG 10740 / 183-1w)).